A 376-amino-acid chain; its full sequence is Chaperone protein DnaJ (376 aa).

Positions 5 to 70 constitute a J domain; it reads DYYEVLGVGR…DKKAAYDQFG (66 aa). The CR-type zinc-finger motif lies at 132-210; that stretch reads GLTKELKVPT…CHGNGRVEKT (79 aa). Zn(2+) is bound by residues Cys145, Cys148, Cys162, Cys165, Cys184, Cys187, Cys198, and Cys201. CXXCXGXG motif repeat units follow at residues 145-152, 162-169, 184-191, and 198-205; these read CDSCDGSG, CGTCHGMG, CPTCHGRG, and CSKCHGNG.

Belongs to the DnaJ family. In terms of assembly, homodimer. It depends on Zn(2+) as a cofactor.

It is found in the cytoplasm. Participates actively in the response to hyperosmotic and heat shock by preventing the aggregation of stress-denatured proteins and by disaggregating proteins, also in an autonomous, DnaK-independent fashion. Unfolded proteins bind initially to DnaJ; upon interaction with the DnaJ-bound protein, DnaK hydrolyzes its bound ATP, resulting in the formation of a stable complex. GrpE releases ADP from DnaK; ATP binding to DnaK triggers the release of the substrate protein, thus completing the reaction cycle. Several rounds of ATP-dependent interactions between DnaJ, DnaK and GrpE are required for fully efficient folding. Also involved, together with DnaK and GrpE, in the DNA replication of plasmids through activation of initiation proteins. The chain is Chaperone protein DnaJ from Shewanella amazonensis (strain ATCC BAA-1098 / SB2B).